Here is a 191-residue protein sequence, read N- to C-terminus: HTH-type transcriptional regulator SAR0097 (191 aa).

In terms of domain architecture, HTH tetR-type spans 12-74 (AEYNQQIILT…AIMDKKVDQM (63 aa)). The H-T-H motif DNA-binding region spans 37 to 56 (KMSDIAKISGVGVGTLYRHF).

In Staphylococcus aureus (strain MRSA252), this protein is HTH-type transcriptional regulator SAR0097.